Here is a 296-residue protein sequence, read N- to C-terminus: Protease HtpX homolog (296 aa).

A run of 2 helical transmembrane segments spans residues 14 to 34 (VVLLIVFFCLLAAIGAAVGYL) and 39 to 59 (YQFGLVLALIIGVIYAVSMIF). H143 lines the Zn(2+) pocket. Residue E144 is part of the active site. Position 147 (H147) interacts with Zn(2+). 2 helical membrane passes run 158-178 (IAVALASAVTLISSIGSRMLF) and 195-215 (ILVLIFSILSLILAPLAASLV). E224 contributes to the Zn(2+) binding site.

This sequence belongs to the peptidase M48B family. Zn(2+) is required as a cofactor.

It localises to the cell membrane. The sequence is that of Protease HtpX homolog from Streptococcus agalactiae serotype Ia (strain ATCC 27591 / A909 / CDC SS700).